The primary structure comprises 411 residues: MSQKSDLRNRIKFTLLLLVLARLGIFIPVPGIDHDAFYASVEKNTLVNFLNIFSGGGFSTIGIFALGIVPYINSSIVMQLLTKIIPDLEKLQKEEGELGRQKITQITRYLALGWATLQSGAISIWVKPYVFNWNFTFVCESVLALTAGSMIIMWLSELITEKGIGNGASLLIFQNIVSGLPKNFTQSFFDANYSNTSIKFGLFIVIFLLMIIITIFVQEGTRRIKIISARQLGKSSILDPNSYLPLKLNQGGVMPIVFASASMALPAYLTQLTQNTFLLQVLYLFCPNGSLYLVLYSVLILFFSYFYTSIVMNPEDIATNLKKMGASIPNIRPGQATIDYLQVILNRLTFLGATFLFTVALIPFIIEKVAQIQNLRGLGATSLLILVGVAIDTAKQIQTYVISKKYDSMTK.

Helical transmembrane passes span 13–33 (FTLLLLVLARLGIFIPVPGID), 52–72 (IFSGGGFSTIGIFALGIVPYI), 111–131 (ALGWATLQSGAISIWVKPYVF), 135–155 (FTFVCESVLALTAGSMIIMWL), 163–180 (GIGNGASLLIFQNIVSGL), 197–217 (SIKFGLFIVIFLLMIIITIFV), 252–272 (GVMPIVFASASMALPAYLTQL), 291–311 (LYLVLYSVLILFFSYFYTSIV), 350–370 (FLGATFLFTVALIPFIIEKVA), and 377–397 (GLGATSLLILVGVAIDTAKQI).

The protein belongs to the SecY/SEC61-alpha family. As to quaternary structure, component of the plastid Sec protein translocase complex, which is composed of at least SecY, SecE and SecG.

The protein localises to the plastid. It is found in the chloroplast thylakoid membrane. In terms of biological role, the central subunit of the protein translocation channel SecYE. Consists of two halves formed by TMs 1-5 and 6-10. These two domains form a lateral gate at the front which open onto the bilayer between TMs 2 and 7, and are clamped together by SecE at the back. The channel is closed by both a pore ring composed of hydrophobic SecY resides and a short helix (helix 2A) on the extracellular side of the membrane which forms a plug. The sequence is that of Protein translocase subunit SecY from Porphyra purpurea (Red seaweed).